A 540-amino-acid chain; its full sequence is CTP synthase (540 aa).

Residues 1-270 (MNNLTSTKFI…DTQILKHFNI (270 aa)) form an amidoligase domain region. Ser18 provides a ligand contact to CTP. A UTP-binding site is contributed by Ser18. Residues 19 to 24 (SLGKGL) and Asp76 contribute to the ATP site. Mg(2+) is bound by residues Asp76 and Glu144. CTP contacts are provided by residues 151–153 (DIE), 191–196 (KTKPTQ), and Lys227. UTP contacts are provided by residues 191 to 196 (KTKPTQ) and Lys227. The Glutamine amidotransferase type-1 domain maps to 295–537 (TIAIIGKYIK…VQASLNYQET (243 aa)). Gly356 contacts L-glutamine. The Nucleophile; for glutamine hydrolysis role is filled by Cys383. L-glutamine contacts are provided by residues 384 to 387 (MGMQ), Glu407, and Arg462. Catalysis depends on residues His510 and Glu512.

Belongs to the CTP synthase family. Homotetramer.

The enzyme catalyses UTP + L-glutamine + ATP + H2O = CTP + L-glutamate + ADP + phosphate + 2 H(+). It carries out the reaction L-glutamine + H2O = L-glutamate + NH4(+). The catalysed reaction is UTP + NH4(+) + ATP = CTP + ADP + phosphate + 2 H(+). Its pathway is pyrimidine metabolism; CTP biosynthesis via de novo pathway; CTP from UDP: step 2/2. Allosterically activated by GTP, when glutamine is the substrate; GTP has no effect on the reaction when ammonia is the substrate. The allosteric effector GTP functions by stabilizing the protein conformation that binds the tetrahedral intermediate(s) formed during glutamine hydrolysis. Inhibited by the product CTP, via allosteric rather than competitive inhibition. Catalyzes the ATP-dependent amination of UTP to CTP with either L-glutamine or ammonia as the source of nitrogen. Regulates intracellular CTP levels through interactions with the four ribonucleotide triphosphates. This is CTP synthase from Ehrlichia ruminantium (strain Welgevonden).